The sequence spans 602 residues: Prostaglandin G/H synthase 1 (602 aa).

An N-terminal signal peptide occupies residues 1-26 (MSRRSLSLWFPLLLLLLLPPTPSVLL). One can recognise an EGF-like domain in the interval 34–72 (PVNPCCYYPCQNQGVCVRFGLDNYQCDCTRTGYSGPNCT). Disulfide bonds link Cys-38–Cys-49, Cys-39–Cys-161, Cys-43–Cys-59, and Cys-61–Cys-71. Residues Asn-70, Asn-106, and Asn-146 are each glycosylated (N-linked (GlcNAc...) asparagine). The active-site Proton acceptor is His-209. The For cyclooxygenase activity role is filled by Tyr-387. His-390 is a binding site for heme b. A disulfide bond links Cys-571 and Cys-577.

This sequence belongs to the prostaglandin G/H synthase family. In terms of assembly, homodimer. The cofactor is heme b.

It is found in the microsome membrane. Its subcellular location is the endoplasmic reticulum membrane. The catalysed reaction is (5Z,8Z,11Z,14Z)-eicosatetraenoate + AH2 + 2 O2 = prostaglandin H2 + A + H2O. It catalyses the reaction (5Z,8Z,11Z,14Z)-eicosatetraenoate + 2 O2 = prostaglandin G2. It carries out the reaction prostaglandin G2 + AH2 = prostaglandin H2 + A + H2O. The enzyme catalyses (9Z,12Z)-octadecadienoate + AH2 + O2 = (9R)-hydroxy-(10E,12Z)-octadecadienoate + A + H2O. The catalysed reaction is (9Z,12Z)-octadecadienoate + AH2 + O2 = (9S)-hydroxy-(10E,12Z)-octadecadienoate + A + H2O. It catalyses the reaction (9Z,12Z)-octadecadienoate + AH2 + O2 = (13S)-hydroxy-(9Z,11E)-octadecadienoate + A + H2O. It carries out the reaction (9Z,12Z)-octadecadienoate + AH2 + O2 = (13R)-hydroxy-(9Z,11E)-octadecadienoate + A + H2O. It participates in lipid metabolism; prostaglandin biosynthesis. With respect to regulation, the cyclooxygenase activity is inhibited by nonsteroidal anti-inflammatory drugs (NSAIDs) including ibuprofen, flurbiprofen, ketoprofen, naproxen, flurbiprofen, anirolac, fenclofenac and diclofenac. In terms of biological role, dual cyclooxygenase and peroxidase that plays an important role in the biosynthesis pathway of prostanoids, a class of C20 oxylipins mainly derived from arachidonate ((5Z,8Z,11Z,14Z)-eicosatetraenoate, AA, C20:4(n-6)), with a particular role in the inflammatory response. The cyclooxygenase activity oxygenates AA to the hydroperoxy endoperoxide prostaglandin G2 (PGG2), and the peroxidase activity reduces PGG2 to the hydroxy endoperoxide prostaglandin H2 (PGH2), the precursor of all 2-series prostaglandins and thromboxanes. This complex transformation is initiated by abstraction of hydrogen at carbon 13 (with S-stereochemistry), followed by insertion of molecular O2 to form the endoperoxide bridge between carbon 9 and 11 that defines prostaglandins. The insertion of a second molecule of O2 (bis-oxygenase activity) yields a hydroperoxy group in PGG2 that is then reduced to PGH2 by two electrons. Involved in the constitutive production of prostanoids in particular in the stomach and platelets. In gastric epithelial cells, it is a key step in the generation of prostaglandins, such as prostaglandin E2 (PGE2), which plays an important role in cytoprotection. In platelets, it is involved in the generation of thromboxane A2 (TXA2), which promotes platelet activation and aggregation, vasoconstriction and proliferation of vascular smooth muscle cells. Can also use linoleate (LA, (9Z,12Z)-octadecadienoate, C18:2(n-6)) as substrate and produce hydroxyoctadecadienoates (HODEs) in a regio- and stereospecific manner, being (9R)-HODE ((9R)-hydroxy-(10E,12Z)-octadecadienoate) and (13S)-HODE ((13S)-hydroxy-(9Z,11E)-octadecadienoate) its major products. The chain is Prostaglandin G/H synthase 1 from Mus musculus (Mouse).